A 749-amino-acid chain; its full sequence is Catalase-peroxidase (749 aa).

The segment at residues 98-234 (WHAAGTYRVQ…LAASHMGLIY (137 aa)) is a cross-link (tryptophyl-tyrosyl-methioninium (Trp-Tyr) (with M-260)). H99 acts as the Proton acceptor in catalysis. The segment at residues 234–260 (YVNPEGPNGEPDPVAAAHDIRTTFGRM) is a cross-link (tryptophyl-tyrosyl-methioninium (Tyr-Met) (with W-98)). H275 provides a ligand contact to heme b.

Belongs to the peroxidase family. Peroxidase/catalase subfamily. As to quaternary structure, homodimer or homotetramer. Heme b serves as cofactor. In terms of processing, formation of the three residue Trp-Tyr-Met cross-link is important for the catalase, but not the peroxidase activity of the enzyme.

Its subcellular location is the cytoplasm. The enzyme catalyses H2O2 + AH2 = A + 2 H2O. It carries out the reaction 2 H2O2 = O2 + 2 H2O. In terms of biological role, bifunctional enzyme with both catalase and broad-spectrum peroxidase activity. The protein is Catalase-peroxidase of Mycosarcoma maydis (Corn smut fungus).